The sequence spans 249 residues: tRNA pseudouridine synthase A (249 aa).

The active-site Nucleophile is Asp-53. Residue Tyr-111 participates in substrate binding.

Belongs to the tRNA pseudouridine synthase TruA family. As to quaternary structure, homodimer.

It carries out the reaction uridine(38/39/40) in tRNA = pseudouridine(38/39/40) in tRNA. Functionally, formation of pseudouridine at positions 38, 39 and 40 in the anticodon stem and loop of transfer RNAs. This Streptococcus pyogenes serotype M3 (strain ATCC BAA-595 / MGAS315) protein is tRNA pseudouridine synthase A.